A 96-amino-acid chain; its full sequence is Protein TraA (96 aa).

The chain is Protein TraA (traA) from Escherichia coli.